The primary structure comprises 377 residues: MSPLRIGTRGSALATTQTSHVAEALTARSGLAHELVVIRTEGDVTTGSLASLGGTGVFASALRAAVLDGVVDAAVHSLKDLPAAQPETLEIAAVPARADLRDALCARDGLTLATLPEGARVGTGSPRRVAQLKALRPDLELVDIRGNVQTRLARVPGLEQHDDHAPAAVGSPRGDLDAVILACAGLDRLGLDHVITERIDPEVMVPAPGQGALAMEIRAEDESFLGRALLDPEAPVGRLHAALELVDDRDTHVAVTAERALLRRLEAGCAAPIGAVARVGDGEAGAPRIEMTAMVAALDGSRVLRRTSSVQLDPVPADVVGDPAAADEWLEDTLFVAAEALGVHVAEQFVAEGADLLPGTVRGVDRGDGAPRPDDPA.

Cysteine 269 carries the S-(dipyrrolylmethanemethyl)cysteine modification.

It belongs to the HMBS family. Monomer. Dipyrromethane is required as a cofactor.

The catalysed reaction is 4 porphobilinogen + H2O = hydroxymethylbilane + 4 NH4(+). The protein operates within porphyrin-containing compound metabolism; protoporphyrin-IX biosynthesis; coproporphyrinogen-III from 5-aminolevulinate: step 2/4. Functionally, tetrapolymerization of the monopyrrole PBG into the hydroxymethylbilane pre-uroporphyrinogen in several discrete steps. The polypeptide is Porphobilinogen deaminase (Micrococcus luteus (strain ATCC 4698 / DSM 20030 / JCM 1464 / CCM 169 / CCUG 5858 / IAM 1056 / NBRC 3333 / NCIMB 9278 / NCTC 2665 / VKM Ac-2230) (Micrococcus lysodeikticus)).